Reading from the N-terminus, the 359-residue chain is Type-1 angiotensin II receptor (359 aa).

Residues 1–25 are Extracellular-facing; that stretch reads MILNSSTEDSIKRIQDDCPKAGRHN. N-linked (GlcNAc...) asparagine glycosylation is present at Asn4. Gln15 and Asp17 together coordinate angiotensin II. 2 disulfides stabilise this stretch: Cys18/Cys274 and Cys101/Cys180. The chain crosses the membrane as a helical span at residues 26–55; sequence YIFVMIPTLYSIIFVVGIFGNSLVVIVIYF. Residues 56–61 lie on the Cytoplasmic side of the membrane; it reads YMKLKT. The chain crosses the membrane as a helical span at residues 62-89; it reads VASVFLLNLALADLCFLLTLPLWAVYTA. The Extracellular segment spans residues 90–98; sequence MEYRWPFGN. The helical transmembrane segment at 99–125 threads the bilayer; that stretch reads YLCKIASASVSFNLYASVFLLTCLSID. Residues 126–141 are Cytoplasmic-facing; it reads RYLAIVHPMKSRLRRT. Residues 142–165 form a helical membrane-spanning segment; the sequence is MLVAKVTCIIIWLLAGLASLPTII. The Extracellular portion of the chain corresponds to 166-190; it reads HRNVFFIENTNITVCAFHYESQNST. Arg167 is a binding site for angiotensin II. A glycan (N-linked (GlcNAc...) asparagine) is linked at Asn176. The angiotensin II site is built by Phe182, His183, and Tyr184. Asn188 carries an N-linked (GlcNAc...) asparagine glycan. Residues 191 to 216 form a helical membrane-spanning segment; sequence LPVGLGLTKNILGFLFPFLIILTSYT. Residue Lys199 participates in angiotensin II binding. Topologically, residues 217–239 are cytoplasmic; the sequence is LIWKALKKAYEIQKNKPRNDDIF. Residues 240–268 form a helical membrane-spanning segment; that stretch reads KIIMAIVLFFFFSWVPHQIFTFLDVLIQL. Residues 269–278 are Extracellular-facing; it reads GIIHDCKIAD. Residues 279–304 form a helical membrane-spanning segment; the sequence is IVDTAMPITICLAYFNNCLNPLFYGF. Residues 305 to 359 are Cytoplasmic-facing; the sequence is LGKKFKKYFLQLLKYIPPKAKSHSSLSTKMSTLSYRPSENGSSSTKKSAPCTEVE. The disordered stretch occupies residues 326–359; the sequence is SHSSLSTKMSTLSYRPSENGSSSTKKSAPCTEVE. The span at 327–351 shows a compositional bias: polar residues; sequence HSSLSTKMSTLSYRPSENGSSSTKK. The S-palmitoyl cysteine moiety is linked to residue Cys355.

This sequence belongs to the G-protein coupled receptor 1 family. Interacts with MAS1. Interacts with ARRB1. Interacts with FLNA (via filamin repeat 21); increases PKA-mediated phosphorylation of FLNA. C-terminal Ser or Thr residues may be phosphorylated.

The protein resides in the cell membrane. Functionally, receptor for angiotensin II, a vasoconstricting peptide, which acts as a key regulator of blood pressure and sodium retention by the kidney. The activated receptor in turn couples to G-alpha proteins G(q) (GNAQ, GNA11, GNA14 or GNA15) and thus activates phospholipase C and increases the cytosolic Ca(2+) concentrations, which in turn triggers cellular responses such as stimulation of protein kinase C. In Sus scrofa (Pig), this protein is Type-1 angiotensin II receptor (AGTR1).